The following is a 147-amino-acid chain: Large ribosomal subunit protein uL15 (147 aa).

The interval 1-57 is disordered; that stretch reads MRLHDVKPQKGSKKRKKRVARGISAGQGASAGLGMRGQKSRSGSGTRPGFEGGQQPL. Over residues 10–20 the composition is skewed to basic residues; the sequence is KGSKKRKKRVA.

The protein belongs to the universal ribosomal protein uL15 family. In terms of assembly, part of the 50S ribosomal subunit.

Functionally, binds to the 23S rRNA. This chain is Large ribosomal subunit protein uL15, found in Nostoc punctiforme (strain ATCC 29133 / PCC 73102).